A 301-amino-acid chain; its full sequence is Probable 5-dehydro-4-deoxyglucarate dehydratase (301 aa).

The protein belongs to the DapA family.

It catalyses the reaction 5-dehydro-4-deoxy-D-glucarate + H(+) = 2,5-dioxopentanoate + CO2 + H2O. It participates in carbohydrate acid metabolism; D-glucarate degradation; 2,5-dioxopentanoate from D-glucarate: step 2/2. The sequence is that of Probable 5-dehydro-4-deoxyglucarate dehydratase from Cereibacter sphaeroides (strain ATCC 17023 / DSM 158 / JCM 6121 / CCUG 31486 / LMG 2827 / NBRC 12203 / NCIMB 8253 / ATH 2.4.1.) (Rhodobacter sphaeroides).